A 138-amino-acid chain; its full sequence is Ribonuclease kappa-A (138 aa).

The N-terminal stretch at 1–24 (MVLYFSPVLTFFLANFFNSKSTTT) is a signal peptide. Residues 25–75 (ENLQVFLVENQHRDSKRKINPTFSKKGIEVRQQNENLWSKIVALRFDYSVW) are Extracellular-facing. Residues 76–96 (GIIQLVLMMGLFFYINSVALI) traverse the membrane as a helical segment. Residues 97–138 (EDLPIDEEFNSVEEFYTAATSAYNQNAYTVGLPVHLCAYASI) lie on the Cytoplasmic side of the membrane.

This sequence belongs to the RNase K family.

It localises to the membrane. Its function is as follows. Endoribonuclease. This chain is Ribonuclease kappa-A, found in Ceratitis capitata (Mediterranean fruit fly).